We begin with the raw amino-acid sequence, 448 residues long: Trigger factor (448 aa).

The region spanning 160-245 (GDMLLMKVES…IQEIREEKLP (86 aa)) is the PPIase FKBP-type domain.

Belongs to the FKBP-type PPIase family. Tig subfamily.

The protein localises to the cytoplasm. It catalyses the reaction [protein]-peptidylproline (omega=180) = [protein]-peptidylproline (omega=0). Its function is as follows. Involved in protein export. Acts as a chaperone by maintaining the newly synthesized protein in an open conformation. Functions as a peptidyl-prolyl cis-trans isomerase. The sequence is that of Trigger factor from Dehalococcoides mccartyi (strain ATCC BAA-2266 / KCTC 15142 / 195) (Dehalococcoides ethenogenes (strain 195)).